The following is a 207-amino-acid chain: Small ribosomal subunit protein uS4c (207 aa).

The region spanning 92–153 (MRLDNILFRL…PKIYQSIITK (62 aa)) is the S4 RNA-binding domain.

Belongs to the universal ribosomal protein uS4 family. As to quaternary structure, part of the 30S ribosomal subunit. Contacts protein S5. The interaction surface between S4 and S5 is involved in control of translational fidelity.

It is found in the plastid. The protein resides in the chloroplast. Functionally, one of the primary rRNA binding proteins, it binds directly to 16S rRNA where it nucleates assembly of the body of the 30S subunit. Its function is as follows. With S5 and S12 plays an important role in translational accuracy. The sequence is that of Small ribosomal subunit protein uS4c (rps4) from Equisetum bogotense (Horsetail).